The following is a 173-amino-acid chain: MFRRYADTLTSEGFIRIVIHAVGRMKAGPERELADRYLDRAAKAGPAIGMELAGVSEIPESRARSTLERKREEGRKLLDFAQGGALILLDERGKNLSSRELGDRFASFRDSGFRQIVMAIGGPDGHDDAVRAAADLSISFGAQTWPHQLVRVMLAEQLYRLITILSGHPYHRD.

Residues Leu-89 and Gly-121 each contribute to the S-adenosyl-L-methionine site.

It belongs to the RNA methyltransferase RlmH family. In terms of assembly, homodimer.

It is found in the cytoplasm. The catalysed reaction is pseudouridine(1915) in 23S rRNA + S-adenosyl-L-methionine = N(3)-methylpseudouridine(1915) in 23S rRNA + S-adenosyl-L-homocysteine + H(+). Functionally, specifically methylates the pseudouridine at position 1915 (m3Psi1915) in 23S rRNA. This chain is Ribosomal RNA large subunit methyltransferase H, found in Chelativorans sp. (strain BNC1).